The following is a 324-amino-acid chain: Zinc transporter ZIP1 (324 aa).

The Extracellular segment spans residues 1–30 (MGPWGEPELLVWRPEAVASEPSVPVGLEVK). Residues 31 to 51 (LGALVLLLLLTLICSLVPVCV) traverse the membrane as a helical segment. Residues 52–68 (LRRSGANHEASASGQKA) are Cytoplasmic-facing. Residues 69 to 89 (LSLVSCFAGGVFLATCLLDLL) form a helical membrane-spanning segment. Residues 90-104 (PDYLAAIDEALEALH) are Extracellular-facing. A helical membrane pass occupies residues 105 to 125 (VTLQFPLQEFILAMGFFLVLV). The Cytoplasmic segment spans residues 126-179 (MEQITLAYKEQTSPPHPEETRALLGTVNGGPQHWHDGPGIPQAGGTPAAPSALR). A helical membrane pass occupies residues 180 to 200 (ACVLVFSLALHSVFEGLAVGL). The Extracellular segment spans residues 201–206 (QRDRAR). Residues 207 to 227 (AMELCLALLLHKGILAVSLSL) form a helical membrane-spanning segment. Over 228 to 237 (RLLQSHLRVQ) the chain is Cytoplasmic. Residues 238–258 (VVAGCGILFSCMTPLGIGLGA) form a helical membrane-spanning segment. The Extracellular portion of the chain corresponds to 259-272 (ALAESAGPLHQLAQ). Residues 273-293 (SVLEGMAAGTFLYITFLEILP) form a helical membrane-spanning segment. Topologically, residues 294-303 (QELATSEQRI) are cytoplasmic. Residues 304–324 (LKVILLLAGFALLTGLLFVQI) form a helical membrane-spanning segment.

This sequence belongs to the ZIP transporter (TC 2.A.5) family. Ubiquitous, except in the pancreas. Highest levels seen in kidney, salivary gland and placenta.

The protein resides in the cell membrane. The protein localises to the endoplasmic reticulum membrane. It catalyses the reaction Zn(2+)(in) = Zn(2+)(out). Functionally, transporter for the divalent cation Zn(2+). Mediates the influx of Zn(2+) into cells from extracellular space. This Mus musculus (Mouse) protein is Zinc transporter ZIP1 (Slc39a1).